A 66-amino-acid polypeptide reads, in one-letter code: uncharacterized protein (66 aa).

2 helical membrane passes run 5-25 and 30-50; these read ALIV…PLVN and IMFG…VTPL.

The protein localises to the cell membrane. This is an uncharacterized protein from Bacillus subtilis (strain 168).